A 503-amino-acid polypeptide reads, in one-letter code: Glutamyl-tRNA(Gln) amidotransferase subunit A (503 aa).

Residues Lys79 and Ser154 each act as charge relay system in the active site. Ser178 acts as the Acyl-ester intermediate in catalysis.

This sequence belongs to the amidase family. GatA subfamily. As to quaternary structure, heterotrimer of A, B and C subunits.

It carries out the reaction L-glutamyl-tRNA(Gln) + L-glutamine + ATP + H2O = L-glutaminyl-tRNA(Gln) + L-glutamate + ADP + phosphate + H(+). In terms of biological role, allows the formation of correctly charged Gln-tRNA(Gln) through the transamidation of misacylated Glu-tRNA(Gln) in organisms which lack glutaminyl-tRNA synthetase. The reaction takes place in the presence of glutamine and ATP through an activated gamma-phospho-Glu-tRNA(Gln). The sequence is that of Glutamyl-tRNA(Gln) amidotransferase subunit A from Agathobacter rectalis (strain ATCC 33656 / DSM 3377 / JCM 17463 / KCTC 5835 / VPI 0990) (Eubacterium rectale).